A 397-amino-acid chain; its full sequence is P2X purinoceptor 3 (397 aa).

At Met-1 to Ser-20 the chain is on the cytoplasmic side. The chain crosses the membrane as a helical span at residues Trp-21–Phe-43. The Extracellular portion of the chain corresponds to Leu-44 to Ile-322. Residues Lys-63 and Lys-65 each coordinate ATP. 3 disulfides stabilise this stretch: Cys-107/Cys-153, Cys-116/Cys-137, and Cys-122/Cys-147. A Mg(2+)-binding site is contributed by Glu-111. An N-linked (GlcNAc...) asparagine glycan is attached at Asn-139. Asp-158 contributes to the Mg(2+) binding site. Asp-158 contacts Ca(2+). N-linked (GlcNAc...) asparagine glycosylation is present at Asn-170. Thr-172 is a binding site for ATP. A glycan (N-linked (GlcNAc...) asparagine) is linked at Asn-194. Disulfide bonds link Cys-203–Cys-213 and Cys-247–Cys-256. ATP-binding residues include Ser-275, Asn-279, and Arg-281. Asn-290 carries an N-linked (GlcNAc...) asparagine glycan. An ATP-binding site is contributed by Lys-299. Residues Ile-323 to Ile-341 traverse the membrane as a helical segment. Topologically, residues Ile-342–His-397 are cytoplasmic.

Belongs to the P2X receptor family. In terms of assembly, homotrimer. Forms heterotrimer with P2RX2. Heterotrimeric P2RX2/3 has a ligand dose-response profile that is distinct from either homotrimeric P2RX2 or P2RX3.

Its subcellular location is the cell membrane. It carries out the reaction Ca(2+)(in) = Ca(2+)(out). The enzyme catalyses Na(+)(in) = Na(+)(out). With respect to regulation, has high sensitivity to ATP. Fast activation by external ATP. Exhibits rapid desensitization. Sensitives to the ATP agonist:alpha/beta-methylene-ATP. Subject to allosteric inhibition by AF-219. Mg(2+) and Ca(2+) slow deactivation of P2RX3. Extracellular ATP-activated non-selective cation channel. Plays particularly important role in sensory neurons where its activation is critical for gustatory, nociceptive responses, visceral reflexes and sensory hypersensitization. This chain is P2X purinoceptor 3 (P2rx3), found in Mus musculus (Mouse).